A 404-amino-acid chain; its full sequence is MLRYLTAGESHGEAIIGVLEGAPAQLPLTPDDINEHLARRWLGYGRGGRSKIENDTVHIYSGVRFGKTLGSPISFRIDNGAYEKDKAGWPEKMAIEGEPPEDMEKVTMPRPGHADLAGKQKYEHDDMRPVIDRSSARETAMRVACCSVARRLLNEFGIEVGSHVVRIGDVGFDEPEEWADRRNALIEEGGGASALYETADESATRMIDDGMTERCVEHIDQTKKDRDSLGGVYEVVVTGVPPGLGSYVHWDRRLDGQLVQAICSIQAQKAAEVGDGFFNAHRPGSQVHDPIEPREDGAQAYPRRTNHAGGTEGGTTTGMPLVVRGYMKPIPTLIKPLDSVDTATGEPEPTRYERSDITSVPAASTVAEATVAYTVANAFLRKYGGDSVPAIRRHVEADRAAPNE.

The NADP(+) site is built by arginine 40 and arginine 46. Residues 133 to 135 (RSS), 266 to 267 (QA), glycine 313, 328 to 332 (KPIPT), and arginine 354 contribute to the FMN site. The tract at residues 283–320 (PGSQVHDPIEPREDGAQAYPRRTNHAGGTEGGTTTGMP) is disordered. The disordered stretch occupies residues 337–357 (LDSVDTATGEPEPTRYERSDI).

This sequence belongs to the chorismate synthase family. As to quaternary structure, homotetramer. It depends on FMNH2 as a cofactor.

It carries out the reaction 5-O-(1-carboxyvinyl)-3-phosphoshikimate = chorismate + phosphate. It functions in the pathway metabolic intermediate biosynthesis; chorismate biosynthesis; chorismate from D-erythrose 4-phosphate and phosphoenolpyruvate: step 7/7. Its function is as follows. Catalyzes the anti-1,4-elimination of the C-3 phosphate and the C-6 proR hydrogen from 5-enolpyruvylshikimate-3-phosphate (EPSP) to yield chorismate, which is the branch point compound that serves as the starting substrate for the three terminal pathways of aromatic amino acid biosynthesis. This reaction introduces a second double bond into the aromatic ring system. This Salinibacter ruber (strain DSM 13855 / M31) protein is Chorismate synthase.